Here is a 157-residue protein sequence, read N- to C-terminus: Subgroup A Rous sarcoma virus receptor pg950 (157 aa).

The signal sequence occupies residues 1–19 (MARLLPALLLLLLPGNVTG). N-linked (GlcNAc...) asparagine glycosylation is found at Asn-20 and Asn-24. The Extracellular portion of the chain corresponds to 20–102 (NGSGNGSLSR…RALPARNHGR (83 aa)). The region spanning 28–71 (SRCPPGQFRCSEPPGAHGECYPQDWLCDGHPDCDDGRDEWGCGT) is the LDL-receptor class A domain. Cystine bridges form between Cys-30/Cys-47, Cys-37/Cys-60, and Cys-54/Cys-69. A glycan (N-linked (GlcNAc...) asparagine) is linked at Asn-81. Residues 103–125 (MWMLITAVLLCCLVAVGGIAAWG) traverse the membrane as a helical segment. Over 126-157 (KSKAKSRSDIFSLASASKELLVPDKSQADLFS) the chain is Cytoplasmic.

As to quaternary structure, (Microbial infection) Interacts with Rous sarcoma virus envelope protein; this interaction allows the viral attachment.

It is found in the membrane. In terms of biological role, responsible for susceptibility to the retrovirus subgroup A Rous sarcoma virus. This chain is Subgroup A Rous sarcoma virus receptor pg950, found in Coturnix japonica (Japanese quail).